Consider the following 640-residue polypeptide: PTS system mannitol-specific EIICBA component (640 aa).

The PTS EIIC type-2 domain occupies 12-343 (LGRFLSAMIM…LKISNRNHYV (332 aa)). 6 consecutive transmembrane segments (helical) span residues 24–45 (ISVF…WCPN), 50–70 (KVLS…TGGY), 134–155 (SVGI…PMIE), 165–185 (VNLM…EPAK), 273–292 (LILG…GGLI), and 313–334 (VINL…CMLL). One can recognise a PTS EIIB type-2 domain in the interval 379–475 (RNIIFACDAG…YLVENNLDNN (97 aa)). Residue Cys385 is the Phosphocysteine intermediate; for EIIB activity of the active site. A Phosphocysteine; by EIIA modification is found at Cys385. Residues 496-638 (FSLTKENIFL…DDVLYLFSRK (143 aa)) form the PTS EIIA type-2 domain. His556 functions as the Tele-phosphohistidine intermediate; for EIIA activity in the catalytic mechanism. His556 carries the post-translational modification Phosphohistidine; by HPr.

In terms of assembly, homodimer. Post-translationally, an intramolecular phosphotransfer takes places between His-556 and Cys-385.

Its subcellular location is the cell inner membrane. It carries out the reaction D-mannitol(out) + N(pros)-phospho-L-histidyl-[protein] = D-mannitol 1-phosphate(in) + L-histidyl-[protein]. In terms of biological role, the phosphoenolpyruvate-dependent sugar phosphotransferase system (sugar PTS), a major carbohydrate active transport system, catalyzes the phosphorylation of incoming sugar substrates concomitantly with their translocation across the cell membrane. This system is involved in D-mannitol transport. The chain is PTS system mannitol-specific EIICBA component (mtlA) from Buchnera aphidicola subsp. Baizongia pistaciae (strain Bp).